We begin with the raw amino-acid sequence, 384 residues long: Intraflagellar transport protein 46 homolog (384 aa).

2 disordered regions span residues 52–151 and 358–384; these read VNAE…PADY and SATDGQKSDTPPASRSATAEIERLTLD. The span at 87–99 shows a compositional bias: basic and acidic residues; it reads EKLEEDTKRKKEP. Over residues 110 to 138 the composition is skewed to acidic residues; sequence DEEEDEDDDDDDDDDDSDDTESDEEEEEP. A compositionally biased stretch (polar residues) spans 358–374; sequence SATDGQKSDTPPASRSA.

It belongs to the IFT46 family.

Its subcellular location is the cytoplasm. It is found in the cytoskeleton. It localises to the cilium basal body. The protein localises to the cell projection. The protein resides in the cilium. In terms of biological role, forms part of a complex involved in intraflagellar transport (IFT), the bi-directional movement of particles required for the assembly, maintenance and functioning of primary cilia. Plays a role in early embryonic development. This Danio rerio (Zebrafish) protein is Intraflagellar transport protein 46 homolog.